The primary structure comprises 357 residues: Spermatogenesis- and oogenesis-specific basic helix-loop-helix-containing protein 1 (357 aa).

Basic and acidic residues predominate over residues 1–14 (MASGGHERANEDYR). Residues 1–40 (MASGGHERANEDYRVSGITGCSKTPQPETQDSLQTSSQSS) form a disordered region. The span at 19–31 (TGCSKTPQPETQD) shows a compositional bias: polar residues. One can recognise a bHLH domain in the interval 54–105 (PSLRRNVVSERERRRRISLSCEHLRALLPQFDGRREDMASVLEMSVYFLQLA). The interval 145–210 (KPDSGIAKPS…EPESSSLGPG (66 aa)) is disordered. A compositionally biased stretch (low complexity) spans 200-209 (SEPESSSLGP).

As to quaternary structure, forms both hetero- and homodimers with SOHLH2. As to expression, in males, it is mainly expressed in testis, while in females it is mainly expressed in ovary. In testis, it is exclusively expressed in spermatogonia, with a preference for prespermatogonia and type A spermatogonia. In ovary, it is detected in germ cell cysts, primordial follicles, and primary follicles but is undetectable by the secondary follicle stage (at protein level). Expressed in the majority of spermatogonia in adult animals, but not in the most undifferentiated spermatogonial population.

It localises to the cytoplasm. Its subcellular location is the nucleus. In terms of biological role, transcription regulator of both male and female germline differentiation. Suppresses genes involved in spermatogonial stem cells maintenance, and induces genes important for spermatogonial differentiation. Coordinates oocyte differentiation without affecting meiosis I. This is Spermatogenesis- and oogenesis-specific basic helix-loop-helix-containing protein 1 (Sohlh1) from Mus musculus (Mouse).